Consider the following 562-residue polypeptide: Dihydroxy-acid dehydratase (562 aa).

Mg(2+) is bound at residue Asp78. A [2Fe-2S] cluster-binding site is contributed by Cys119. Mg(2+) is bound by residues Asp120 and Lys121. Lys121 carries the post-translational modification N6-carboxylysine. Cys192 provides a ligand contact to [2Fe-2S] cluster. Residue Glu450 participates in Mg(2+) binding. The active-site Proton acceptor is Ser476.

The protein belongs to the IlvD/Edd family. In terms of assembly, homodimer. [2Fe-2S] cluster serves as cofactor. Requires Mg(2+) as cofactor.

The catalysed reaction is (2R)-2,3-dihydroxy-3-methylbutanoate = 3-methyl-2-oxobutanoate + H2O. It catalyses the reaction (2R,3R)-2,3-dihydroxy-3-methylpentanoate = (S)-3-methyl-2-oxopentanoate + H2O. It functions in the pathway amino-acid biosynthesis; L-isoleucine biosynthesis; L-isoleucine from 2-oxobutanoate: step 3/4. Its pathway is amino-acid biosynthesis; L-valine biosynthesis; L-valine from pyruvate: step 3/4. In terms of biological role, functions in the biosynthesis of branched-chain amino acids. Catalyzes the dehydration of (2R,3R)-2,3-dihydroxy-3-methylpentanoate (2,3-dihydroxy-3-methylvalerate) into 2-oxo-3-methylpentanoate (2-oxo-3-methylvalerate) and of (2R)-2,3-dihydroxy-3-methylbutanoate (2,3-dihydroxyisovalerate) into 2-oxo-3-methylbutanoate (2-oxoisovalerate), the penultimate precursor to L-isoleucine and L-valine, respectively. The chain is Dihydroxy-acid dehydratase from Nautilia profundicola (strain ATCC BAA-1463 / DSM 18972 / AmH).